The following is a 172-amino-acid chain: Scytalone dehydratase-like protein Arp1 (172 aa).

Tyrosine 49 contributes to the substrate binding site. Residues histidine 84 and histidine 109 contribute to the active site. Asparagine 130 contributes to the substrate binding site.

Belongs to the scytalone dehydratase family. Homotrimer. Each subunit contains an active site, located in the central part of the hydrophobic core of the monomer, which functions independently.

In terms of biological role, scytalone dehydratase-like protein; part of the Pks2 gene cluster that mediates the formation of infectious structures (appressoria), enabling these fungi to kill insects faster. The product of the Pks2 gene cluster is different from the one of Pks1 and has still not been identified. The polypeptide is Scytalone dehydratase-like protein Arp1 (Metarhizium robertsii (strain ARSEF 23 / ATCC MYA-3075) (Metarhizium anisopliae (strain ARSEF 23))).